A 137-amino-acid chain; its full sequence is MTEKVIKTDAEWRAMLDDEEYDVTRHAATEAPFSGRYWDHHEHGIYTCVCCNTPLFASDAKFDSGCGWPSYFTALNPDNVKEKIDRAYGMIRTEVICNVCDAHLGHVFNDGPPPTGLRYCINSASLRFDATPDLNES.

One can recognise a MsrB domain in the interval 9–131; that stretch reads DAEWRAMLDD…NSASLRFDAT (123 aa). Zn(2+) contacts are provided by cysteine 48, cysteine 51, cysteine 97, and cysteine 100. Cysteine 120 acts as the Nucleophile in catalysis.

It belongs to the MsrB Met sulfoxide reductase family. Zn(2+) serves as cofactor.

The enzyme catalyses L-methionyl-[protein] + [thioredoxin]-disulfide + H2O = L-methionyl-(R)-S-oxide-[protein] + [thioredoxin]-dithiol. The polypeptide is Peptide methionine sulfoxide reductase MsrB (Herminiimonas arsenicoxydans).